The chain runs to 357 residues: uncharacterized protein (357 aa).

Transmembrane regions (helical) follow at residues 13-33 (PVTG…TYLV), 44-64 (IACT…CAVY), 72-92 (VSTF…TCFL), 148-168 (VLTY…FCFV), 181-201 (LPIS…SGFF), 203-223 (YLFI…LGIW), 266-286 (IALT…SALF), 293-313 (SISG…PFLI), and 327-347 (YWVL…VVLL).

It localises to the mitochondrion membrane. This is an uncharacterized protein from Schizosaccharomyces pombe (strain 972 / ATCC 24843) (Fission yeast).